The chain runs to 336 residues: MTTIDPRSELVDGRRRAGARVDAVGAAALLSAAARVGVVCHVHPDADTIGAGLALALVLDGCGKRVEVSFAAPATLPESLRSLPGCHLLVRPEVMRRDVDLVVTVDIPSVDRLGALGDLTDSGRELLVIDHHASNDLFGTANFIDPSADSTTTMVAEILDAWGKPIDPRVAHCIYAGLATDTGSFRWASVRGYRLAARLVEIGVDNATVSRTLMDSHPFTWLPLLSRVLGSAQLVSEAVGGRGLVYVVVDNREWVAARSEEVESIVDIVRTTQQAEVAAVFKEVEPHRWSVSMRAKTVNLAAVASGFGGGGHRLAAGYTTTGSIDDAVASLRAALG.

The protein belongs to the NrnA oligoribonuclease family. Mn(2+) serves as cofactor.

It catalyses the reaction adenosine 3',5'-bisphosphate + H2O = AMP + phosphate. In terms of biological role, bifunctional enzyme which has both oligoribonuclease and pAp-phosphatase activities. Degrades RNA oligonucleotides with a length of 5 nucleotides and shorter, with a preference for 2-mers. Also degrades 24-mers. Converts 3'(2')-phosphoadenosine 5'-phosphate (PAP) to AMP. In Mycobacterium tuberculosis (strain ATCC 25618 / H37Rv), this protein is Bifunctional oligoribonuclease and PAP phosphatase NrnA (nrnA).